A 252-amino-acid polypeptide reads, in one-letter code: NDR1/HIN1-like protein 6 (252 aa).

Residues methionine 1 to proline 46 form a disordered region. A helical membrane pass occupies residues phenylalanine 70–valine 90. Residues asparagine 121, asparagine 154, asparagine 166, and asparagine 180 are each glycosylated (N-linked (GlcNAc...) asparagine).

As to quaternary structure, homodimer. As to expression, highly expressed in seeds and at lower level in roots and senescing leaves. Expressed in leaves and flowers.

The protein localises to the cell membrane. The protein resides in the cytoplasm. It localises to the cytosol. In terms of biological role, plays an important role in the abiotic stresses-induced abscisic acid (ABA) signaling and biosynthesis. Acts as a positive regulator of ABA-mediated seed germination inhibition. Functions downstream of ABF2/AREB1, ABF4/AREB2 and ABF3. The chain is NDR1/HIN1-like protein 6 from Arabidopsis thaliana (Mouse-ear cress).